A 212-amino-acid polypeptide reads, in one-letter code: Adenylate kinase (212 aa).

10–15 is an ATP binding site; that stretch reads GAGKGT. The NMP stretch occupies residues 30–59; that stretch reads AIGDIFRTIIKTSTSEAELINNYVRQGELI. Residues Arg36, 57-59, 85-88, and Gln92 contribute to the AMP site; these read ELI and GYPR. The tract at residues 122 to 160 is LID; it reads GRYSCKNCGKIYNRYFLQPKTDNVCDVCGSSTFDYRKDD. Arg123 contributes to the ATP binding site. Residues Cys126 and Cys129 each coordinate Zn(2+). Position 132–133 (132–133) interacts with ATP; that stretch reads IY. Cys146 and Cys149 together coordinate Zn(2+). Residues Arg157 and Arg168 each contribute to the AMP site. Lys196 is a binding site for ATP.

It belongs to the adenylate kinase family. As to quaternary structure, monomer.

The protein localises to the cytoplasm. It catalyses the reaction AMP + ATP = 2 ADP. Its pathway is purine metabolism; AMP biosynthesis via salvage pathway; AMP from ADP: step 1/1. Its function is as follows. Catalyzes the reversible transfer of the terminal phosphate group between ATP and AMP. Plays an important role in cellular energy homeostasis and in adenine nucleotide metabolism. The protein is Adenylate kinase of Rickettsia rickettsii (strain Iowa).